The chain runs to 413 residues: Transposon Ty4-H Gag polyprotein (413 aa).

Residues arginine 39–asparagine 115 are a coiled coil. Residues arginine 380–tyrosine 413 form a disordered region. Over residues glutamine 403–tyrosine 413 the composition is skewed to low complexity.

Functionally, capsid protein (CA) is the structural component of the virus-like particle (VLP), forming the shell that encapsulates the retrotransposons dimeric RNA genome. The chain is Transposon Ty4-H Gag polyprotein (TY4A-H) from Saccharomyces cerevisiae (strain ATCC 204508 / S288c) (Baker's yeast).